Here is a 1793-residue protein sequence, read N- to C-terminus: MASSEADSRLSRVVTPALEKIVKNASWRKHSKLANECKAVIERLNSLQKSPPPSSSAATDSESESSVPGPLNDGGSIEYSLADSELIFSPLINACGTGLAKIIEPAIDCIQKLIAHGYIRGESDPSGGAESLLLFKLIDSVCKCHDLGDESIELPVLKTLLSAINSISLRIHGKCLLLVVRTCYDIYLGSKNVVNQTTAKASLIQILVIVFRRMEADSSTVPIQPIVVAELMEPLEKSDADGTMTQFVQGFITKIMQDIDGVLNPTMSGSGSGSGSGGQDGAYGTTTVETTNPTDLLDSTDKDMLDAKYWEISMYKSALEGRKGELTDGDAERDDDLEVQIENKLRRDACLVFRALCKLSMKAPPKESSADPQSMRGKILALELLKILLENAGAVFRTSEKFSADIKQFLCLSLLKNSASTLMIIFQLSCSIFISLVARFRAGLKAEIGVFFPMIVLRVVENVAQPNFQQKMIVLRFLDKLCLDSQILVDIFLNYDCDVNSSNIFERMVNGLLKTAQGVPPGTATTLMPPQEAAMKLEAMKCLVAILKSMGDWLNKQLRLPVSNSLNKSDVIEIDLGPGSPQLANGNADESADGSDTYSESSGGTSDALAIEQRRAYKLELQEGISLFNRKPTKGIEFLINAGKVGESPEEIAGFLKDASGLNKTLIGDYLGEREDLALKVMHAYVDSFDFRGMEFDEAIRTFLEGFRLPGEAQKIDRIMEKFAERYCKCNPKVFTSADSAYVLAYSVIMLNTDAHNPMVKNKMSADDFIRNNRGIDDGKDLPADYMRSLYERITKHEIKMKEDDLRLQQKQYANSNRMLGLDGILNIVIRKQWGDSYAETSDDLMKHMQEQFKEKARKSESTYYAATDVVILRFMIEACWAPMLAAFSVPLDQSDDLIVINICLEGFHHAIHATSLMSMKTHRDAFVTSLAKFTSLHSPADIKQRNIEAIKAILRLADEEGNYLQDAWEHILTCVSRFEQLHLLGEGAPPDATFFASKQNESEKSKQPKQYILPVLKRKGPGKSQYAATGVLRGSYDSMSLGGKGSKNVRQEQMSSIVSNLNLLEQVGEMNQVFSQSQKLNSEAIIDFVKALCKVSMDELRSPSNPRVFSLTKIVEIAHYNMNRIRLVWSSIWQVLSGFFVTIGCSENLSIAIFAMDSLRQLSMKFLEREELANYNFQNEFMTPFVIVMRRSNDVEIRELIIRCVSQMVLSRVNNVKSGWKSMFMVFTTAAYDDHKNIVFLSFEIIEKIIREYFPYITETETTTFTDCVNCLVAFTNNRFSKDISLSSIAFLRYCATKLAEGDLNSPSTNKYKGTSGKIPQSSLHSGKSGKQENGEIVNNNHLYFWFPLLSGLSELSFDPRPEIRKSALQIMFDTLRNHGHLFSLPLWEKVFESVLFPIFDYVRHSIDPSGEDESADQGSSGGEVDELDHDAWLYETCTLALQLVVDLFVKFYTTVNPLLEKVLMLLVSFIKRPHQSLAGIGIAAFVRLMSDADGLFSEEKWLEVVSALKEAAKTTCPDFSYFLSEEYVARSQRSALNIQNSNAESAAPTATDGNEESQRTATHLYAAISDAKCRAAVQLLLIQAVMEIYNMYRPQLSAKNTLVLVDALHGVALHAHGINSNTILRSRLQELGPMTQMQDPPLLRLENESYQICLTFLQNLVADKTKKEEEEEEEEIESLLVNICQEVLNFYIETSSSAKKLQSESSRASEYRWRIPLGSGKRRELSARAPLIVATLQAMCTLDEASFEKNLKCLFPLLANLISCEHGSNEVQTALADMLGLSVGPVLLQWC.

A2 bears the N-acetylalanine mark. Disordered stretches follow at residues 45-71 (NSLQ…PGPL), 266-299 (TMSG…LLDS), and 579-606 (GSPQ…GGTS). A compositionally biased stretch (low complexity) spans 55-66 (SSAATDSESESS). The segment covering 270–281 (SGSGSGSGGQDG) has biased composition (gly residues). Polar residues-rich tracts occupy residues 284 to 294 (GTTTVETTNPT) and 594 to 605 (GSDTYSESSGGT). S595 bears the Phosphoserine mark. Residues 610–797 (AIEQRRAYKL…RSLYERITKH (188 aa)) form the SEC7 domain. E712 is an active-site residue. Positions 1311 to 1327 (NKYKGTSGKIPQSSLHS) are enriched in polar residues. A disordered region spans residues 1311–1333 (NKYKGTSGKIPQSSLHSGKSGKQ).

Homodimer.

The protein resides in the cytoplasm. It localises to the cytosol. The protein localises to the membrane. With respect to regulation, inhibited by brefeldin A. In terms of biological role, activates the ARF proteins by exchanging bound GDP for free GTP. Plays a role in vesicular protein sorting. The chain is Brefeldin A-inhibited guanine nucleotide-exchange protein 2 (BIG2) from Arabidopsis thaliana (Mouse-ear cress).